The following is a 469-amino-acid chain: MGVCTEERPVMHWQQSARFLGPGAREKSPTPPVAHQGSNQCGSAAGANNNHPLFRACSSSSCPDICDHSTKPFGNAYGTESFRSYETADRATFEDSAAKFSISRSRTDCTEVSDETTSGISFKTEPFGPPSSPESTSDSKITRNLDDCSGCGRQIQDRFYLSAVEKRWHASCLQCYACRQPLERESSCYSRDGNIYCKNDYYSFFGTRRCSRCLASISSNELVMRARNLVFHVNCFCCTVCHTPLTKGDQYGIIDALIYCRTHYSIAREGDTASSSMSATYPYSAQFGSPHNDSSSPHSDPSRSIVPTGIFVPASHVINGLPQPARQKGRPRKRKPKDIEAFTANIDLNTEYVDFGRGSHLSSSSRTKRMRTSFKHHQLRTMKSYFAINHNPDAKDLKQLSQKTGLPKRVLQVWFQNARAKWRRMMMKQDGSGLLEKGEGALDLDSISVHSPTSFILGGPNSTPPLNLD.

Disordered regions lie at residues 21-44 (GPGA…CGSA) and 111-141 (EVSD…DSKI). 2 LIM zinc-binding domains span residues 148–200 (CSGC…CKND) and 210–263 (CSRC…CRTH). The segment at residues 367 to 426 (TKRMRTSFKHHQLRTMKSYFAINHNPDAKDLKQLSQKTGLPKRVLQVWFQNARAKWRRMM) is a DNA-binding region (homeobox).

As to expression, expressed in PNS and CNS.

The protein localises to the nucleus. Required for the normal development of the wing and halter imaginal disks. This chain is Protein apterous (ap), found in Drosophila melanogaster (Fruit fly).